Here is an 82-residue protein sequence, read N- to C-terminus: RGVCTRVYTTTPKKPNSALXKVCRIRLTNGFEVTSYIGGEGHNLQEHSVVLIRGGRVKDLPGVRYHTVRGALDCASVKDRKQ.

D59 carries the 3-methylthioaspartic acid modification.

Belongs to the universal ribosomal protein uS12 family. As to quaternary structure, part of the 30S ribosomal subunit. Contacts proteins S8 and S17. May interact with IF1 in the 30S initiation complex.

Its function is as follows. With S4 and S5 plays an important role in translational accuracy. Interacts with and stabilizes bases of the 16S rRNA that are involved in tRNA selection in the A site and with the mRNA backbone. Located at the interface of the 30S and 50S subunits, it traverses the body of the 30S subunit contacting proteins on the other side and probably holding the rRNA structure together. The combined cluster of proteins S8, S12 and S17 appears to hold together the shoulder and platform of the 30S subunit. The chain is Small ribosomal subunit protein uS12 (rpsL) from Actinobacillus pleuropneumoniae (Haemophilus pleuropneumoniae).